We begin with the raw amino-acid sequence, 201 residues long: Large ribosomal subunit protein uL4 (201 aa).

Positions 45–75 (AQKSRSEVSGSGKKPWRQKGTGRARSGSLRS) are disordered.

It belongs to the universal ribosomal protein uL4 family. In terms of assembly, part of the 50S ribosomal subunit.

Functionally, one of the primary rRNA binding proteins, this protein initially binds near the 5'-end of the 23S rRNA. It is important during the early stages of 50S assembly. It makes multiple contacts with different domains of the 23S rRNA in the assembled 50S subunit and ribosome. Forms part of the polypeptide exit tunnel. In Buchnera aphidicola subsp. Cinara cedri (strain Cc), this protein is Large ribosomal subunit protein uL4.